Consider the following 209-residue polypeptide: Small ribosomal subunit protein uS5 (209 aa).

The 64-residue stretch at Leu48–Ile111 folds into the S5 DRBM domain.

This sequence belongs to the universal ribosomal protein uS5 family. As to quaternary structure, part of the 30S ribosomal subunit. Contacts protein S4.

In terms of biological role, with S4 and S12 plays an important role in translational accuracy. The sequence is that of Small ribosomal subunit protein uS5 from Methanosarcina acetivorans (strain ATCC 35395 / DSM 2834 / JCM 12185 / C2A).